The primary structure comprises 222 residues: PKHD-type hydroxylase PCC8801_2196 (222 aa).

Residues 78-175 (RIHSLLFSRY…RLVVVGWIES (98 aa)) enclose the Fe2OG dioxygenase domain. 3 residues coordinate Fe cation: histidine 96, aspartate 98, and histidine 156. Residue arginine 166 participates in 2-oxoglutarate binding.

It depends on Fe(2+) as a cofactor. L-ascorbate is required as a cofactor.

In Rippkaea orientalis (strain PCC 8801 / RF-1) (Cyanothece sp. (strain PCC 8801)), this protein is PKHD-type hydroxylase PCC8801_2196.